The following is a 379-amino-acid chain: Caffeyl-CoA reductase-Etf complex subunit CarC (379 aa).

Residues 122–131 (FALTEPGAGS) and 155–157 (FIT) each bind FAD. Residue S131 coordinates substrate. A substrate-binding site is contributed by 239 to 242 (DVGR). FAD-binding positions include R267, Q278, and 335 to 339 (QIHGG). The active-site Proton acceptor is E362. A substrate-binding site is contributed by G363. 364-366 (TSQ) contributes to the FAD binding site.

This sequence belongs to the acyl-CoA dehydrogenase family. In terms of assembly, part of the homotrimeric caffeyl-CoA reductase-Etf complex composed of (R)-2-hydroxyisocaproyl-CoA dehydratase CarC, and the electron transfer flavoprotein (ETF) alpha (CarE) and beta (CarD) subunits. FAD serves as cofactor.

The protein localises to the cytoplasm. It carries out the reaction hydrocaffeoyl-CoA + 2 reduced [2Fe-2S]-[ferredoxin] + 2 NAD(+) = (E)-caffeoyl-CoA + 2 oxidized [2Fe-2S]-[ferredoxin] + 2 NADH. Its function is as follows. The Caffeyl-CoA reductase-Etf complex catalyzes the reduction of caffeyl-CoA to yield hydrocaffeyl-CoA. It couples the endergonic ferredoxin reduction with NADH as reductant to the exergonic reduction of caffeoyl-CoA with the same reductant. It uses the mechanism of electron bifurcation to overcome the steep energy barrier in ferredoxin reduction. Also reduces 4-coumaroyl-CoA and feruloyl-CoA. The protein is Caffeyl-CoA reductase-Etf complex subunit CarC of Acetobacterium woodii (strain ATCC 29683 / DSM 1030 / JCM 2381 / KCTC 1655 / WB1).